The primary structure comprises 354 residues: Uroporphyrinogen decarboxylase (354 aa).

Residues 27–31 (RQAGR), Asp-77, Tyr-154, Thr-209, and His-327 each bind substrate.

Belongs to the uroporphyrinogen decarboxylase family. In terms of assembly, homodimer.

The protein resides in the cytoplasm. The enzyme catalyses uroporphyrinogen III + 4 H(+) = coproporphyrinogen III + 4 CO2. The protein operates within porphyrin-containing compound metabolism; protoporphyrin-IX biosynthesis; coproporphyrinogen-III from 5-aminolevulinate: step 4/4. Catalyzes the decarboxylation of four acetate groups of uroporphyrinogen-III to yield coproporphyrinogen-III. This chain is Uroporphyrinogen decarboxylase, found in Escherichia coli O17:K52:H18 (strain UMN026 / ExPEC).